Consider the following 464-residue polypeptide: 3-ketoacyl-CoA synthase 19 (464 aa).

A helical transmembrane segment spans residues 3–25; that stretch reads LFSLSSLLLLSTLFVFYIFKFVF. Positions 24–318 constitute an FAE domain; sequence VFKRRNQRNC…AIVRALKRRT (295 aa). Residues cysteine 172, histidine 251, histidine 339, histidine 343, histidine 372, and asparagine 376 contribute to the active site.

Belongs to the thiolase-like superfamily. Chalcone/stilbene synthases family. In terms of tissue distribution, expressed in siliques.

It is found in the membrane. The catalysed reaction is a very-long-chain acyl-CoA + malonyl-CoA + H(+) = a very-long-chain 3-oxoacyl-CoA + CO2 + CoA. It participates in lipid metabolism; fatty acid biosynthesis. The protein is 3-ketoacyl-CoA synthase 19 of Arabidopsis thaliana (Mouse-ear cress).